The following is a 37-amino-acid chain: Large ribosomal subunit protein bL36 (37 aa).

Belongs to the bacterial ribosomal protein bL36 family.

The polypeptide is Large ribosomal subunit protein bL36 (Chromohalobacter salexigens (strain ATCC BAA-138 / DSM 3043 / CIP 106854 / NCIMB 13768 / 1H11)).